A 477-amino-acid chain; its full sequence is Adenosylhomocysteinase (477 aa).

The substrate site is built by threonine 63, aspartate 142, and glutamate 202. Threonine 203–threonine 205 is a binding site for NAD(+). The substrate site is built by lysine 232 and aspartate 236. Residues asparagine 237, glycine 266–glycine 271, glutamate 289, asparagine 324, isoleucine 345–histidine 347, and asparagine 390 each bind NAD(+).

Belongs to the adenosylhomocysteinase family. NAD(+) serves as cofactor.

It localises to the cytoplasm. It carries out the reaction S-adenosyl-L-homocysteine + H2O = L-homocysteine + adenosine. It participates in amino-acid biosynthesis; L-homocysteine biosynthesis; L-homocysteine from S-adenosyl-L-homocysteine: step 1/1. Its function is as follows. May play a key role in the regulation of the intracellular concentration of adenosylhomocysteine. This chain is Adenosylhomocysteinase, found in Leptothrix cholodnii (strain ATCC 51168 / LMG 8142 / SP-6) (Leptothrix discophora (strain SP-6)).